We begin with the raw amino-acid sequence, 202 residues long: Peptidyl-tRNA hydrolase (202 aa).

Y17 contacts tRNA. The active-site Proton acceptor is H22. Residues F76, N78, and N124 each coordinate tRNA.

It belongs to the PTH family. In terms of assembly, monomer.

It is found in the cytoplasm. It carries out the reaction an N-acyl-L-alpha-aminoacyl-tRNA + H2O = an N-acyl-L-amino acid + a tRNA + H(+). Functionally, hydrolyzes ribosome-free peptidyl-tRNAs (with 1 or more amino acids incorporated), which drop off the ribosome during protein synthesis, or as a result of ribosome stalling. Its function is as follows. Catalyzes the release of premature peptidyl moieties from peptidyl-tRNA molecules trapped in stalled 50S ribosomal subunits, and thus maintains levels of free tRNAs and 50S ribosomes. This Nitratidesulfovibrio vulgaris (strain DSM 19637 / Miyazaki F) (Desulfovibrio vulgaris) protein is Peptidyl-tRNA hydrolase.